The primary structure comprises 655 residues: E3 ubiquitin-protein ligase TRIM32 (655 aa).

The RING-type zinc-finger motif lies at 21–66 (CPICMESFTEEQLRPKLLHCGHTICRQCLEKLLASSINGVRCPFCS). Ser-56 carries the post-translational modification Phosphoserine; by CHEK2. The segment at 96-139 (VGLLMCRGCGRRLPRQFCRSCGVVLCEPCREADHQPPGHCTLPV) adopts a B box-type; atypical zinc-finger fold. Cys-101, Cys-104, Cys-124, and His-129 together coordinate Zn(2+). Residues 139-198 (VKEAAEERRRDFGEKLTRLRELTGELQRRKAALEGVSRDLQARYKAVLQEYGHEERRIQE) are a coiled coil. The disordered stretch occupies residues 327–347 (MDMSPEEVAPSPRASPAKQRS). Phosphoserine occurs at positions 330, 337, and 341. NHL repeat units lie at residues 360–403 (LKKM…FNRK), 417–460 (DSFV…YTMD), 461–501 (GHCV…FTVD), 564–607 (GRQI…FPKG), and 608–648 (GGYS…YSYH).

This sequence belongs to the TRIM/RBCC family. As to quaternary structure, it self-associates. Interacts with DTNBP1. Interacts with PIAS4/PIASY upon treatment with UVB and TNF-alpha. Interacts with AMBRA1; promoting activation of ULK1 through unanchored 'Lys-63'-linked polyubiquitin chains. Interacts with TICAM1 and TAX1BP1; these interactions target TICAM1 to TAX1BP1-mediated selective autophagic degradation. In terms of processing, ubiquitinated. Phosphorylation at Ser-56 by CHEK2 under oxidative stress, activates the E3 ligase activity and promotes ATG7 ubiquitination leading to positive regulation of the autophagosme assembly. Ubiquitous. High expression in brain.

The protein resides in the cytoplasm. The catalysed reaction is S-ubiquitinyl-[E2 ubiquitin-conjugating enzyme]-L-cysteine + [acceptor protein]-L-lysine = [E2 ubiquitin-conjugating enzyme]-L-cysteine + N(6)-ubiquitinyl-[acceptor protein]-L-lysine.. It participates in protein modification; protein ubiquitination. In terms of biological role, E3 ubiquitin ligase that plays a role in various biological processes including neural stem cell differentiation, innate immunity, inflammatory resonse and autophagy. Plays a role in virus-triggered induction of IFN-beta and TNF-alpha by mediating the ubiquitination of STING1. Mechanistically, targets STING1 for 'Lys-63'-linked ubiquitination which promotes the interaction of STING1 with TBK1. Regulates bacterial clearance and promotes autophagy in Mycobacterium tuberculosis-infected macrophages. Negatively regulates TLR3/4-mediated innate immune and inflammatory response by triggering the autophagic degradation of TICAM1 in an E3 activity-independent manner. Plays an essential role in oxidative stress induced cell death by inducing loss of transmembrane potential and enhancing mitochondrial reactive oxygen species (ROS) production during oxidative stress conditions. Ubiquitinates XIAP and targets it for proteasomal degradation. Ubiquitinates DTNBP1 (dysbindin) and promotes its degradation. May ubiquitinate BBS2. Ubiquitinates PIAS4/PIASY and promotes its degradation in keratinocytes treated with UVB and TNF-alpha. Also acts as a regulator of autophagy by mediating formation of unanchored 'Lys-63'-linked polyubiquitin chains that activate ULK1: interaction with AMBRA1 is required for ULK1 activation. Positively regulates dendritic branching by promoting ubiquitination and subsequent degradation of the epigenetic factor CDYL. Under metabolic stress and phosphorylation by CHK2, mediates 'Lys-63'-linked ubiquitination of ATG7 at 'Lys-41' to initiate autophagy. The protein is E3 ubiquitin-protein ligase TRIM32 of Mus musculus (Mouse).